A 387-amino-acid chain; its full sequence is Chlorophyll synthase, chloroplastic (387 aa).

The transit peptide at 1–57 (MTSILNTVSTIHSSRVTSVDRVGVLSLRNSDSVEFTRRRSGFSTLIYESPGRRFVVR) directs the protein to the chloroplast. A disordered region spans residues 62–81 (DTDKVKSQTPDKAPAGGSSI). A run of 7 helical transmembrane segments spans residues 182–202 (VITQVWVLLLGGLGIAGILDV), 210–230 (TVFYLALGGSLLSYIYSAPPL), 241–261 (FALGASYISLPWWAGQALFGT), 266–286 (VVVLTLLYSIAGLGIAIVNDF), 311–331 (WICVGAIDITQLSVAGYLLAS), 336–356 (YALALVALIIPQIVFQFKYFL), and 364–384 (VKYQASAQPFLVLGIFVTALA).

The protein belongs to the UbiA prenyltransferase family. Chlorophyll synthase subfamily. As to expression, low level in flower buds, flowers, stems, leaves, greening cotyledons and immature siliques, but not in mature siliques or seeds.

The protein localises to the plastid. The protein resides in the chloroplast membrane. It carries out the reaction phytyl diphosphate + chlorophyllide a + H(+) = chlorophyll a + diphosphate. Its pathway is porphyrin-containing compound metabolism; chlorophyll biosynthesis. Involved in one of the last steps of the biosynthesis of chlorophyll a. Catalyzes the esterification of chlorophillide a or b with a preference for geranylgeranyldiphosphate (GGPP) rather than for phytyldiphosphate (PhyPP). In Arabidopsis thaliana (Mouse-ear cress), this protein is Chlorophyll synthase, chloroplastic (CHLG).